The sequence spans 239 residues: Ribonuclease PH (239 aa).

Residues Arg-86 and 124–126 (GTR) each bind phosphate.

It belongs to the RNase PH family. In terms of assembly, homohexameric ring arranged as a trimer of dimers.

The enzyme catalyses tRNA(n+1) + phosphate = tRNA(n) + a ribonucleoside 5'-diphosphate. Phosphorolytic 3'-5' exoribonuclease that plays an important role in tRNA 3'-end maturation. Removes nucleotide residues following the 3'-CCA terminus of tRNAs; can also add nucleotides to the ends of RNA molecules by using nucleoside diphosphates as substrates, but this may not be physiologically important. Probably plays a role in initiation of 16S rRNA degradation (leading to ribosome degradation) during starvation. The protein is Ribonuclease PH of Marinomonas sp. (strain MWYL1).